A 342-amino-acid polypeptide reads, in one-letter code: Methionyl-tRNA formyltransferase (342 aa).

Residue 119–122 (SILP) coordinates (6S)-5,6,7,8-tetrahydrofolate.

It belongs to the Fmt family.

It carries out the reaction L-methionyl-tRNA(fMet) + (6R)-10-formyltetrahydrofolate = N-formyl-L-methionyl-tRNA(fMet) + (6S)-5,6,7,8-tetrahydrofolate + H(+). Its function is as follows. Attaches a formyl group to the free amino group of methionyl-tRNA(fMet). The formyl group appears to play a dual role in the initiator identity of N-formylmethionyl-tRNA by promoting its recognition by IF2 and preventing the misappropriation of this tRNA by the elongation apparatus. The sequence is that of Methionyl-tRNA formyltransferase from Nostoc sp. (strain PCC 7120 / SAG 25.82 / UTEX 2576).